Here is a 296-residue protein sequence, read N- to C-terminus: Magnetosome protein MamB (296 aa).

Topologically, residues 1-12 (MKFENCRDCREE) are cytoplasmic. The segment at 1–214 (MKFENCRDCR…GLMDSSVDTE (214 aa)) is transmembrane domain (TMD). A helical transmembrane segment spans residues 13 to 33 (VVWWAFTADICMTLFKGVLGL). Residues 34–83 (MSGSVALVADSLHSGADVVASGVTQLSLKISNKPADERYPFGYGNIQYIS) are Lumenal-facing. The helical transmembrane segment at 84–104 (SSIVGSLLLIGASFLMYGSVM) threads the bilayer. The Cytoplasmic segment spans residues 105 to 112 (KLISGTYE). A helical membrane pass occupies residues 113-133 (APSIFAAVGASVTVIVNELMY). Residues 134–164 (RYQICVGNENNSPAIIANAWDNRSDAISSAA) lie on the Lumenal side of the membrane. A helical transmembrane segment spans residues 165 to 185 (VMVGVIASVIGFPIADTIAAI). Residues 186–296 (GVSALVGRIG…SPAPAAAARA (111 aa)) lie on the Cytoplasmic side of the membrane. Residues 215–296 (LLQTAWQVAM…SPAPAAAARA (82 aa)) form a C-terminal domain (CTD) region.

Belongs to the cation diffusion facilitator (CDF) transporter (TC 2.A.4) family. As to quaternary structure, forms heterodimers with MamM. Probably interacts with MamE.

It is found in the magnetosome membrane. In terms of biological role, plays a dual, essential role in magnetosome formation; required for magnetosome vesicle formation as well as biomineralization. Probably binds and transports iron. Requires heterodimerization with MamM for stability. This chain is Magnetosome protein MamB (mamB), found in Paramagnetospirillum magneticum (strain ATCC 700264 / AMB-1) (Magnetospirillum magneticum).